Here is a 199-residue protein sequence, read N- to C-terminus: Holliday junction branch migration complex subunit RuvA (199 aa).

Positions 1-63 (MIASVRGEVL…EDSMTLYGFT (63 aa)) are domain I. Residues 64–142 (DAETRDLFLT…AAGAAGAPAG (79 aa)) are domain II. Residues 143-153 (AARNGHAVRGP) are flexible linker. The interval 153–199 (PVVEALVGLGFAAKQAEEATDKVLAAEPEAGTSGALRAALSLLGKSR) is domain III.

Belongs to the RuvA family. In terms of assembly, homotetramer. Forms an RuvA(8)-RuvB(12)-Holliday junction (HJ) complex. HJ DNA is sandwiched between 2 RuvA tetramers; dsDNA enters through RuvA and exits via RuvB. An RuvB hexamer assembles on each DNA strand where it exits the tetramer. Each RuvB hexamer is contacted by two RuvA subunits (via domain III) on 2 adjacent RuvB subunits; this complex drives branch migration. In the full resolvosome a probable DNA-RuvA(4)-RuvB(12)-RuvC(2) complex forms which resolves the HJ.

Its subcellular location is the cytoplasm. In terms of biological role, the RuvA-RuvB-RuvC complex processes Holliday junction (HJ) DNA during genetic recombination and DNA repair, while the RuvA-RuvB complex plays an important role in the rescue of blocked DNA replication forks via replication fork reversal (RFR). RuvA specifically binds to HJ cruciform DNA, conferring on it an open structure. The RuvB hexamer acts as an ATP-dependent pump, pulling dsDNA into and through the RuvAB complex. HJ branch migration allows RuvC to scan DNA until it finds its consensus sequence, where it cleaves and resolves the cruciform DNA. The chain is Holliday junction branch migration complex subunit RuvA from Mycobacterium avium (strain 104).